The primary structure comprises 150 residues: uncharacterized protein (150 aa).

This is an uncharacterized protein from Acidianus filamentous virus 1 (isolate United States/Yellowstone) (AFV-1).